The chain runs to 411 residues: Dual-specificity RNA methyltransferase RlmN (411 aa).

The active-site Proton acceptor is the Glu-124. Residues 130–379 (EEGRGTLCIS…IRTPRGRDIL (250 aa)) form the Radical SAM core domain. A disulfide bond links Cys-137 and Cys-382. Residues Cys-144, Cys-148, and Cys-151 each contribute to the [4Fe-4S] cluster site. S-adenosyl-L-methionine-binding positions include 208-209 (GE), Ser-240, 262-264 (SLH), and Asn-339. Residue Cys-382 is the S-methylcysteine intermediate of the active site.

Belongs to the radical SAM superfamily. RlmN family. [4Fe-4S] cluster is required as a cofactor.

The protein localises to the cytoplasm. The catalysed reaction is adenosine(2503) in 23S rRNA + 2 reduced [2Fe-2S]-[ferredoxin] + 2 S-adenosyl-L-methionine = 2-methyladenosine(2503) in 23S rRNA + 5'-deoxyadenosine + L-methionine + 2 oxidized [2Fe-2S]-[ferredoxin] + S-adenosyl-L-homocysteine. The enzyme catalyses adenosine(37) in tRNA + 2 reduced [2Fe-2S]-[ferredoxin] + 2 S-adenosyl-L-methionine = 2-methyladenosine(37) in tRNA + 5'-deoxyadenosine + L-methionine + 2 oxidized [2Fe-2S]-[ferredoxin] + S-adenosyl-L-homocysteine. In terms of biological role, specifically methylates position 2 of adenine 2503 in 23S rRNA and position 2 of adenine 37 in tRNAs. m2A2503 modification seems to play a crucial role in the proofreading step occurring at the peptidyl transferase center and thus would serve to optimize ribosomal fidelity. This Sinorhizobium fredii (strain NBRC 101917 / NGR234) protein is Dual-specificity RNA methyltransferase RlmN.